A 427-amino-acid polypeptide reads, in one-letter code: Ribosomal protein uS12 methylthiotransferase RimO (427 aa).

An MTTase N-terminal domain is found at 1 to 116 (MNFYVEVLGC…IATHIGKRNV (116 aa)). The [4Fe-4S] cluster site is built by C10, C46, C79, C145, C149, and C152. One can recognise a Radical SAM core domain in the interval 131-360 (VDNGQYAYVK…MDIQSQISFE (230 aa)). Residues 363-426 (EKLVGKKLKV…IYDLEGEIVE (64 aa)) enclose the TRAM domain.

The protein belongs to the methylthiotransferase family. RimO subfamily. [4Fe-4S] cluster is required as a cofactor.

Its subcellular location is the cytoplasm. The enzyme catalyses L-aspartate(89)-[ribosomal protein uS12]-hydrogen + (sulfur carrier)-SH + AH2 + 2 S-adenosyl-L-methionine = 3-methylsulfanyl-L-aspartate(89)-[ribosomal protein uS12]-hydrogen + (sulfur carrier)-H + 5'-deoxyadenosine + L-methionine + A + S-adenosyl-L-homocysteine + 2 H(+). Functionally, catalyzes the methylthiolation of an aspartic acid residue of ribosomal protein uS12. In Thermosipho melanesiensis (strain DSM 12029 / CIP 104789 / BI429), this protein is Ribosomal protein uS12 methylthiotransferase RimO.